The following is a 307-amino-acid chain: 2-carboxy-1,4-naphthoquinone phytyltransferase (307 aa).

Transmembrane regions (helical) follow at residues 27 to 47 (MYTV…GLTG), 51 to 71 (GDVF…INLS), 98 to 118 (LVFL…MSMS), 125 to 145 (TVLE…GPPF), 147 to 167 (LGYL…LAIA), 177 to 197 (FSWN…IILF), 223 to 243 (LGSQ…AIGV), and 284 to 304 (FIAV…YGWA).

The protein belongs to the MenA family. Type 2 subfamily.

It localises to the cell inner membrane. The catalysed reaction is 2-carboxy-1,4-naphthoquinone + phytyl diphosphate + H(+) = demethylphylloquinone + CO2 + diphosphate. The protein operates within cofactor biosynthesis; phylloquinone biosynthesis. In terms of biological role, involved in the synthesis of phylloquinone (vitamin K1). Catalyzes the transfer of a prenyl chain to 2-carboxy-1,4-naphthoquinone. In Synechocystis sp. (strain ATCC 27184 / PCC 6803 / Kazusa), this protein is 2-carboxy-1,4-naphthoquinone phytyltransferase.